The following is a 587-amino-acid chain: Monocopper oxidase-like protein SKU5 (587 aa).

Residues 1 to 20 (MDLFKILLLVFFVNISFCFA) form the signal peptide. Asparagine 14 and asparagine 58 each carry an N-linked (GlcNAc...) asparagine glycan. A Cu cation-binding site is contributed by histidine 80. N-linked (GlcNAc...) asparagine glycans are attached at residues asparagine 107, asparagine 169, asparagine 200, asparagine 257, asparagine 278, asparagine 293, asparagine 342, asparagine 362, asparagine 430, and asparagine 444. Position 452 (histidine 452) interacts with Cu cation. Asparagine 534 carries N-linked (GlcNAc...) asparagine glycosylation. The GPI-anchor amidated serine moiety is linked to residue serine 562. Residues 563-587 (ASKSIGFTSLSMVVMALVMMMMLQH) constitute a propeptide, removed in mature form.

It belongs to the multicopper oxidase family. It depends on Cu cation as a cofactor. In terms of tissue distribution, expressed in roots, hypocotyls, cotyledons, leaves, stems and flowers.

The protein localises to the secreted. It is found in the cell wall. It localises to the cell membrane. Its function is as follows. May be a monocopper oxidase of unknown specificity. Involved in directional growth processes, possibly by participating in cell wall expansion. The chain is Monocopper oxidase-like protein SKU5 (SKU5) from Arabidopsis thaliana (Mouse-ear cress).